The primary structure comprises 256 residues: Thiazole synthase (256 aa).

The Schiff-base intermediate with DXP role is filled by Lys95. 1-deoxy-D-xylulose 5-phosphate-binding positions include Gly156, 182–183 (AG), and 204–205 (NT).

The protein belongs to the ThiG family. In terms of assembly, homotetramer. Forms heterodimers with either ThiH or ThiS.

The protein resides in the cytoplasm. It carries out the reaction [ThiS sulfur-carrier protein]-C-terminal-Gly-aminoethanethioate + 2-iminoacetate + 1-deoxy-D-xylulose 5-phosphate = [ThiS sulfur-carrier protein]-C-terminal Gly-Gly + 2-[(2R,5Z)-2-carboxy-4-methylthiazol-5(2H)-ylidene]ethyl phosphate + 2 H2O + H(+). Its pathway is cofactor biosynthesis; thiamine diphosphate biosynthesis. In terms of biological role, catalyzes the rearrangement of 1-deoxy-D-xylulose 5-phosphate (DXP) to produce the thiazole phosphate moiety of thiamine. Sulfur is provided by the thiocarboxylate moiety of the carrier protein ThiS. In vitro, sulfur can be provided by H(2)S. The sequence is that of Thiazole synthase from Shigella flexneri.